The primary structure comprises 599 residues: Sulfite reductase [NADPH] flavoprotein alpha-component (599 aa).

One can recognise a Flavodoxin-like domain in the interval 64-202 (ITLISASQTG…VAAQWRARIV (139 aa)). Residues 70–75 (SQTGNA), 117–120 (STQG), and 153–162 (LGDTSYEFFC) each bind FMN. Positions 234 to 448 (EAPLRASLSV…IEHNDNFRLP (215 aa)) constitute an FAD-binding FR-type domain. Residues Thr-322, Ala-356, 386-389 (RLYS), 404-406 (TVG), Tyr-410, and 419-422 (GGAS) contribute to the FAD site. Residues 519–520 (SR), 525–529 (KIYVQ), and Asp-561 contribute to the NADP(+) site. Tyr-599 provides a ligand contact to FAD.

The protein belongs to the NADPH-dependent sulphite reductase flavoprotein subunit CysJ family. This sequence in the N-terminal section; belongs to the flavodoxin family. In the C-terminal section; belongs to the flavoprotein pyridine nucleotide cytochrome reductase family. As to quaternary structure, alpha(8)-beta(8). The alpha component is a flavoprotein, the beta component is a hemoprotein. FAD is required as a cofactor. FMN serves as cofactor.

The catalysed reaction is hydrogen sulfide + 3 NADP(+) + 3 H2O = sulfite + 3 NADPH + 4 H(+). The protein operates within sulfur metabolism; hydrogen sulfide biosynthesis; hydrogen sulfide from sulfite (NADPH route): step 1/1. Component of the sulfite reductase complex that catalyzes the 6-electron reduction of sulfite to sulfide. This is one of several activities required for the biosynthesis of L-cysteine from sulfate. The flavoprotein component catalyzes the electron flow from NADPH -&gt; FAD -&gt; FMN to the hemoprotein component. This Salmonella arizonae (strain ATCC BAA-731 / CDC346-86 / RSK2980) protein is Sulfite reductase [NADPH] flavoprotein alpha-component.